A 330-amino-acid chain; its full sequence is 7,8-didemethyl-8-hydroxy-5-deazariboflavin synthase (330 aa).

The 241-residue stretch at 5 to 245 (VTFSRNVFIP…SDVAVQVAPN (241 aa)) folds into the Radical SAM core domain. [4Fe-4S] cluster-binding residues include C19, C23, and C26.

The protein belongs to the radical SAM superfamily. CofG family. Consists of two subunits, CofG and CofH. [4Fe-4S] cluster is required as a cofactor.

It catalyses the reaction 5-amino-5-(4-hydroxybenzyl)-6-(D-ribitylimino)-5,6-dihydrouracil + S-adenosyl-L-methionine = 7,8-didemethyl-8-hydroxy-5-deazariboflavin + 5'-deoxyadenosine + L-methionine + NH4(+) + H(+). It participates in cofactor biosynthesis; coenzyme F0 biosynthesis. Functionally, catalyzes the radical-mediated synthesis of 7,8-didemethyl-8-hydroxy-5-deazariboflavin from 5-amino-5-(4-hydroxybenzyl)-6-(D-ribitylimino)-5,6-dihydrouracil. The protein is 7,8-didemethyl-8-hydroxy-5-deazariboflavin synthase of Methanococcoides burtonii (strain DSM 6242 / NBRC 107633 / OCM 468 / ACE-M).